Reading from the N-terminus, the 271-residue chain is Formamidopyrimidine-DNA glycosylase (271 aa).

The active-site Schiff-base intermediate with DNA is Pro-2. Catalysis depends on Glu-3, which acts as the Proton donor. Lys-57 acts as the Proton donor; for beta-elimination activity in catalysis. 3 residues coordinate DNA: His-90, Arg-109, and Arg-151. An FPG-type zinc finger spans residues 236-270 (MVYGRAGEACVTCKTKLQEIRQSNRSSVFCPSCQQ). The active-site Proton donor; for delta-elimination activity is Arg-260.

It belongs to the FPG family. In terms of assembly, monomer. Requires Zn(2+) as cofactor.

It catalyses the reaction Hydrolysis of DNA containing ring-opened 7-methylguanine residues, releasing 2,6-diamino-4-hydroxy-5-(N-methyl)formamidopyrimidine.. The enzyme catalyses 2'-deoxyribonucleotide-(2'-deoxyribose 5'-phosphate)-2'-deoxyribonucleotide-DNA = a 3'-end 2'-deoxyribonucleotide-(2,3-dehydro-2,3-deoxyribose 5'-phosphate)-DNA + a 5'-end 5'-phospho-2'-deoxyribonucleoside-DNA + H(+). Its function is as follows. Involved in base excision repair of DNA damaged by oxidation or by mutagenic agents. Acts as a DNA glycosylase that recognizes and removes damaged bases. Has a preference for oxidized purines, such as 7,8-dihydro-8-oxoguanine (8-oxoG). Has AP (apurinic/apyrimidinic) lyase activity and introduces nicks in the DNA strand. Cleaves the DNA backbone by beta-delta elimination to generate a single-strand break at the site of the removed base with both 3'- and 5'-phosphates. The chain is Formamidopyrimidine-DNA glycosylase from Colwellia psychrerythraea (strain 34H / ATCC BAA-681) (Vibrio psychroerythus).